Here is a 588-residue protein sequence, read N- to C-terminus: Aspartate--tRNA ligase (588 aa).

Residue Glu-171 coordinates L-aspartate. Residues 195 to 198 are aspartate; that stretch reads QLFK. Arg-217 lines the L-aspartate pocket. ATP is bound by residues 217-219 and Gln-226; that span reads RDE. His-447 contributes to the L-aspartate binding site. Residue Glu-481 participates in ATP binding. An L-aspartate-binding site is contributed by Arg-488. ATP is bound at residue 533–536; sequence GLDR.

It belongs to the class-II aminoacyl-tRNA synthetase family. Type 1 subfamily. As to quaternary structure, homodimer.

It localises to the cytoplasm. The catalysed reaction is tRNA(Asp) + L-aspartate + ATP = L-aspartyl-tRNA(Asp) + AMP + diphosphate. Its function is as follows. Catalyzes the attachment of L-aspartate to tRNA(Asp) in a two-step reaction: L-aspartate is first activated by ATP to form Asp-AMP and then transferred to the acceptor end of tRNA(Asp). In Aeromonas salmonicida (strain A449), this protein is Aspartate--tRNA ligase.